The following is a 580-amino-acid chain: MHNVNTTTTGLSLAKILASTELGDNTIQAGNDAANKLFSLTIADLTANKNINTTNAHSTSNILIPELKAPKSLNASSQLTLLIGNLIQILGEKSLTALTNKITAWKSQQQARQQKNLEFSDKINTLLSETEGLTRDYEKQINKLKNADSKIKDLENKINQIQTRLSELDPDSPEKKKLSREEIQLTIKKDAAVKDRTLIEQKTLSIHSKLTDKSMQLEKEIDSFSAFSNTASAEQLSTQQKSLTGLASVTQLMATFIQLVGKNNEESLKNDLALFQSLQESRKTEMERKSDEYAAEVRKAEELNRVMGCVGKILGALLTIVSVVAAAFSGGASLALADVGLALMVTDAIVQAATGNSFMEQALNPIMKAVIEPLIKLLSDAFTKMLEGLGVDSKKAKMIGSILGAIAGALVLVAAVVLVATVGKQAAAKLAENIGKIIGKTLTDLIPKFLKNFSSQLDDLITNAVARLNKFLGAAGDEVISKQIISTHLNQAVLLGESVNSATQAGGSVASAVFQNSASTNLADLTLSKYQVEQLSKYISEAIEKFGQLQEVIADLLASMSNSQANRTDVAKAILQQTTA.

2 helical membrane-spanning segments follow: residues 313–333 (ILGALLTIVSVVAAAFSGGAS) and 399–419 (IGSILGAIAGALVLVAAVVLV).

This sequence belongs to the SctE/SipB/YopB family. In terms of assembly, the core secretion machinery of the T3SS is composed of approximately 20 different proteins, including cytoplasmic components, a base, an export apparatus and a needle. This subunit is involved in the formation of a pore, called the translocon, in host membrane.

The protein resides in the secreted. It is found in the host membrane. Component of the type III secretion system (T3SS), also called injectisome, which is used to inject bacterial effector proteins into eukaryotic host cells. IpaB/SctE and IpaC/SctB are inserted into the host membrane where they form a pore and allow the translocation of effector proteins into the cytosol of target cells. This is Type 3 secretion system translocon protein SctE from Shigella dysenteriae.